A 341-amino-acid chain; its full sequence is HTH-type transcriptional repressor PurR (341 aa).

In terms of domain architecture, HTH lacI-type spans alanine 2–valine 56. The segment at residues isoleucine 4–asparagine 23 is a DNA-binding region (H-T-H motif). A DNA-binding region spans residues serine 48–valine 56. Residues tyrosine 73, arginine 190, threonine 192, phenylalanine 221, and aspartate 275 each coordinate hypoxanthine.

Homodimer.

It functions in the pathway purine metabolism; purine nucleotide biosynthesis [regulation]. Functionally, is the main repressor of the genes involved in the de novo synthesis of purine nucleotides, regulating purB, purC, purEK, purF, purHD, purL, purMN and guaBA expression. PurR is allosterically activated to bind its cognate DNA by binding the purine corepressors, hypoxanthine or guanine, thereby effecting transcription repression. The sequence is that of HTH-type transcriptional repressor PurR from Proteus mirabilis (strain HI4320).